Reading from the N-terminus, the 465-residue chain is uncharacterized protein (465 aa).

The chain crosses the membrane as a helical span at residues 56–76 (ILYMIIFAIFGLLPFLIALIF). The interval 177–198 (KFNKSKKSNKINDKTPILNNNN) is disordered. Residues 273 to 293 (LIFLLVSTILLIALIGFILII) traverse the membrane as a helical segment. The disordered stretch occupies residues 411–449 (NNYNNSNNNNNSNNSNSNNNNNNNNNNNNYNNNNYNNNN).

The protein localises to the membrane. This is an uncharacterized protein from Dictyostelium discoideum (Social amoeba).